The primary structure comprises 488 residues: 26S proteasome non-ATPase regulatory subunit 3 homolog A (488 aa).

Positions 240 to 421 (CRYLFYLGKI…GCMVSKETGD (182 aa)) constitute a PCI domain. The tract at residues 451–488 (RFPPNTHKEKESDEKRRERKQQEEELAKHMAEEDDDDF) is disordered. The span at 456 to 481 (THKEKESDEKRRERKQQEEELAKHMA) shows a compositional bias: basic and acidic residues.

Belongs to the proteasome subunit S3 family. As to quaternary structure, component of the 19S regulatory particle (RP/PA700) lid subcomplex of the 26S proteasome. The 26S proteasome is composed of a core protease (CP), known as the 20S proteasome, capped at one or both ends by the 19S regulatory particle (RP/PA700). The RP/PA700 complex is composed of at least 17 different subunits in two subcomplexes, the base and the lid, which form the portions proximal and distal to the 20S proteolytic core, respectively. Interacts with UCH1 and UCH2. Ubiquitous with highest expression in flowers.

In terms of biological role, acts as a regulatory subunit of the 26 proteasome which is involved in the ATP-dependent degradation of ubiquitinated proteins. The chain is 26S proteasome non-ATPase regulatory subunit 3 homolog A from Arabidopsis thaliana (Mouse-ear cress).